Consider the following 219-residue polypeptide: Envelope protein UL45 homolog (219 aa).

Topologically, residues 1 to 57 are intravirion; the sequence is MEDYKLLQLETATVDAQAPPLPTKTVPVFAPPLSTPPQPNELVYTKRRRTKRKAKCR. A helical; Signal-anchor for type II membrane protein membrane pass occupies residues 58–78; it reads CLFFTMGMFALGVLMTTAILV. At 79 to 219 the chain is on the virion surface side; that stretch reads STFILTVPIG…RLDHIIPFPR (141 aa). N-linked (GlcNAc...) asparagine; by host glycans are attached at residues asparagine 113, asparagine 120, and asparagine 138.

The protein belongs to the herpesviridae HHV-1 UL45 family. In terms of processing, N-glycosylated.

The protein resides in the virion membrane. The chain is Envelope protein UL45 homolog from Equine herpesvirus 1 (strain Ab4p) (EHV-1).